The primary structure comprises 145 residues: Large ribosomal subunit protein uL13 (145 aa).

This sequence belongs to the universal ribosomal protein uL13 family. In terms of assembly, part of the 50S ribosomal subunit.

This protein is one of the early assembly proteins of the 50S ribosomal subunit, although it is not seen to bind rRNA by itself. It is important during the early stages of 50S assembly. This Macrococcus caseolyticus (strain JCSC5402) (Macrococcoides caseolyticum) protein is Large ribosomal subunit protein uL13.